The chain runs to 297 residues: Formamidopyrimidine-DNA glycosylase (297 aa).

Pro2 serves as the catalytic Schiff-base intermediate with DNA. The active-site Proton donor is the Glu3. Lys58 (proton donor; for beta-elimination activity) is an active-site residue. Residues His106, Arg125, and Arg168 each contribute to the DNA site. The segment at 259–295 (RVYDREGLACTARGCRGRVRRIVQAGRSTFYCETCQP) adopts an FPG-type zinc-finger fold. The active-site Proton donor; for delta-elimination activity is the Arg285.

Belongs to the FPG family. As to quaternary structure, monomer. It depends on Zn(2+) as a cofactor.

It carries out the reaction Hydrolysis of DNA containing ring-opened 7-methylguanine residues, releasing 2,6-diamino-4-hydroxy-5-(N-methyl)formamidopyrimidine.. It catalyses the reaction 2'-deoxyribonucleotide-(2'-deoxyribose 5'-phosphate)-2'-deoxyribonucleotide-DNA = a 3'-end 2'-deoxyribonucleotide-(2,3-dehydro-2,3-deoxyribose 5'-phosphate)-DNA + a 5'-end 5'-phospho-2'-deoxyribonucleoside-DNA + H(+). Functionally, involved in base excision repair of DNA damaged by oxidation or by mutagenic agents. Acts as a DNA glycosylase that recognizes and removes damaged bases. Has a preference for oxidized purines, such as 7,8-dihydro-8-oxoguanine (8-oxoG). Has AP (apurinic/apyrimidinic) lyase activity and introduces nicks in the DNA strand. Cleaves the DNA backbone by beta-delta elimination to generate a single-strand break at the site of the removed base with both 3'- and 5'-phosphates. In Methylobacterium sp. (strain 4-46), this protein is Formamidopyrimidine-DNA glycosylase.